The sequence spans 286 residues: MTNQTIQEALGHGQGNDLGNSDGHRIEYVETIEAYNKWAEVYDTDGNFLQALDTFEMKDLLPRFLCLVQTQTNGKSNMTPGEQVLKLVDLGCGTGRNTLQLAKSAPKEAQIIGLDASPGMLEVAEGNLKAQGVMGTVDERRVVLGVYDLLSPRPESLPVSLRGEARASGAISTLVLEHIPLDKFFEGAARLIRPGGYLLVTNMHAEMGAISQAGFVDVTSGKKIRPTSYAHEVGNVIAAAERAGFEIVPLNGAEKVRERRVNEEMVALLGSRARKWVNVVVWFGLS.

This sequence belongs to the methyltransferase superfamily.

In terms of biological role, involved in osmoadaptation. This is an uncharacterized protein from Emericella nidulans (strain FGSC A4 / ATCC 38163 / CBS 112.46 / NRRL 194 / M139) (Aspergillus nidulans).